A 143-amino-acid polypeptide reads, in one-letter code: Hemoglobin subunit alpha-2 (143 aa).

An N-acetylserine modification is found at serine 2. The Globin domain maps to serine 2–arginine 143. Histidine 60 serves as a coordination point for O2. Histidine 89 contributes to the heme b binding site.

It belongs to the globin family. As to quaternary structure, hb2 is a heterotetramer of two alpha-2 chains and two beta-1 chains; Hb3 is a heterotetramer of two alpha-2 chains and two beta-2 chains. In terms of tissue distribution, red blood cells.

Involved in oxygen transport from gills to the various peripheral tissues. This is Hemoglobin subunit alpha-2 (hba2) from Anarhichas minor (Arctic spotted wolffish).